A 57-amino-acid chain; its full sequence is DELTA-limacoditoxin(2)-Dv11 (57 aa).

The N-terminal stretch at Met-1–Pro-24 is a signal peptide.

Belongs to the limacoditoxin-2 (cecropin-like) family. In terms of tissue distribution, expressed by the venom secretory cell of the spine. The spine is a cuticular structure containing a single large nucleated venom-secreting cell at its base. It is an independent unit capable of producing, storing and injecting venom. On the back of D.vulnerans caterpillars, spines are grouped together by 50 to 100 to form scoli, of which there are eight in D.vulnerans.

It localises to the secreted. Functionally, peptide that induces pain in mammals and has insecticidal, antibacterial and antiparasitic activities. Induces partially reversible paralysis in D.melanogaster when tested at high doses. Shows a moderate antiparasitic activity against the major pathogenic nematode of ruminants (H.contortus, EC(50)=30.5 uM). Has potent or moderate antibacterial activities against A.baumannii (MIC&lt;0.25 ug/mL) and S.aureus (MIC=16 ug/mL). Has no activity on the other bacteria tested, nor on the fungus C.albicans. Strongly induces the increase of intracellular calcium in mice DRG neurons, which is a proxy for neuronal activation that would occur during nociception. This increase is due to influx of extracellular calcium, suggesting that the peptide forms pore or channel in neuronal cell membranes. In addition, intraplantar injection in mice provokes nocifensive behavior, suggesting a pain-inducing activity. In Doratifera vulnerans (Mottled cup moth), this protein is DELTA-limacoditoxin(2)-Dv11.